A 67-amino-acid polypeptide reads, in one-letter code: ATP synthase F(0) complex subunit 8 (67 aa).

A helical transmembrane segment spans residues Thr-8–Phe-24. N6-acetyllysine; alternate is present on Lys-54. Lys-54 carries the post-translational modification N6-succinyllysine; alternate. Lys-57 is subject to N6-acetyllysine.

The protein belongs to the ATPase protein 8 family. Component of the ATP synthase complex composed at least of ATP5F1A/subunit alpha, ATP5F1B/subunit beta, ATP5MC1/subunit c (homooctomer), MT-ATP6/subunit a, MT-ATP8/subunit 8, ATP5ME/subunit e, ATP5MF/subunit f, ATP5MG/subunit g, ATP5MK/subunit k, ATP5MJ/subunit j, ATP5F1C/subunit gamma, ATP5F1D/subunit delta, ATP5F1E/subunit epsilon, ATP5PF/subunit F6, ATP5PB/subunit b, ATP5PD/subunit d, ATP5PO/subunit OSCP. ATP synthase complex consists of a soluble F(1) head domain (subunits alpha(3) and beta(3)) - the catalytic core - and a membrane F(0) domain - the membrane proton channel (subunits c, a, 8, e, f, g, k and j). These two domains are linked by a central stalk (subunits gamma, delta, and epsilon) rotating inside the F1 region and a stationary peripheral stalk (subunits F6, b, d, and OSCP). Interacts with PRICKLE3.

Its subcellular location is the mitochondrion membrane. Its function is as follows. Subunit 8, of the mitochondrial membrane ATP synthase complex (F(1)F(0) ATP synthase or Complex V) that produces ATP from ADP in the presence of a proton gradient across the membrane which is generated by electron transport complexes of the respiratory chain. ATP synthase complex consist of a soluble F(1) head domain - the catalytic core - and a membrane F(1) domain - the membrane proton channel. These two domains are linked by a central stalk rotating inside the F(1) region and a stationary peripheral stalk. During catalysis, ATP synthesis in the catalytic domain of F(1) is coupled via a rotary mechanism of the central stalk subunits to proton translocation. In vivo, can only synthesize ATP although its ATP hydrolase activity can be activated artificially in vitro. Part of the complex F(0) domain. The polypeptide is ATP synthase F(0) complex subunit 8 (Felis catus (Cat)).